We begin with the raw amino-acid sequence, 206 residues long: Putative amino-acid transporter YggA (206 aa).

Transmembrane regions (helical) follow at residues 1–21, 37–57, 65–85, 116–136, 148–168, and 185–205; these read MFAT…PIGA, LLAA…GVFG, SPIG…WFGI, LGVT…LGSF, FAAG…FGAA, and TIVG…ALLA.

This sequence belongs to the LysE/ArgO transporter (TC 2.A.75) family.

It localises to the cell membrane. In Aeromonas salmonicida, this protein is Putative amino-acid transporter YggA (yggA).